Consider the following 207-residue polypeptide: FMN-dependent NADH:quinone oxidoreductase (207 aa).

Residue Ser10 participates in FMN binding.

This sequence belongs to the azoreductase type 1 family. Homodimer. FMN serves as cofactor.

The enzyme catalyses 2 a quinone + NADH + H(+) = 2 a 1,4-benzosemiquinone + NAD(+). The catalysed reaction is N,N-dimethyl-1,4-phenylenediamine + anthranilate + 2 NAD(+) = 2-(4-dimethylaminophenyl)diazenylbenzoate + 2 NADH + 2 H(+). Quinone reductase that provides resistance to thiol-specific stress caused by electrophilic quinones. Functionally, also exhibits azoreductase activity. Catalyzes the reductive cleavage of the azo bond in aromatic azo compounds to the corresponding amines. In Shouchella clausii (strain KSM-K16) (Alkalihalobacillus clausii), this protein is FMN-dependent NADH:quinone oxidoreductase.